The sequence spans 165 residues: Glycine cleavage system H protein, mitochondrial (165 aa).

The N-terminal 34 residues, 1 to 34 (MALRMWASSTANALKLSSSSRLHLSPTFSISRCF), are a transit peptide targeting the mitochondrion. In terms of domain architecture, Lipoyl-binding spans 56-138 (VATIGITDHA…YEDGWMIKIK (83 aa)). Lys-97 carries the post-translational modification N6-lipoyllysine.

It belongs to the GcvH family. In terms of assembly, the glycine cleavage system is composed of four proteins: P, T, L and H. The cofactor is (R)-lipoate.

The protein localises to the mitochondrion. Functionally, the glycine cleavage system catalyzes the degradation of glycine. The H protein shuttles the methylamine group of glycine from the P protein to the T protein. This is Glycine cleavage system H protein, mitochondrial (GDCSH) from Pisum sativum (Garden pea).